The chain runs to 207 residues: 2,3-bisphosphoglycerate-dependent phosphoglycerate mutase (207 aa).

Residues 10-17 (RHGQSEWN), 23-24 (TG), arginine 62, 89-92 (ERDY), lysine 100, 116-117 (RR), and 160-161 (GN) each bind substrate. The Tele-phosphohistidine intermediate role is filled by histidine 11. Residue glutamate 89 is the Proton donor/acceptor of the active site.

It belongs to the phosphoglycerate mutase family. BPG-dependent PGAM subfamily. In terms of assembly, homodimer.

It catalyses the reaction (2R)-2-phosphoglycerate = (2R)-3-phosphoglycerate. It functions in the pathway carbohydrate degradation; glycolysis; pyruvate from D-glyceraldehyde 3-phosphate: step 3/5. In terms of biological role, catalyzes the interconversion of 2-phosphoglycerate and 3-phosphoglycerate. The protein is 2,3-bisphosphoglycerate-dependent phosphoglycerate mutase of Bradyrhizobium sp. (strain BTAi1 / ATCC BAA-1182).